Consider the following 807-residue polypeptide: Centrosomal protein of 97 kDa (807 aa).

LRR repeat units follow at residues 34–55, 56–77, 78–99, 100–121, 122–143, 144–165, and 168–189; these read DTQT…EKCR, NLVQ…AKLI, HLRV…KDLV, HLEW…NSST, SLQH…SKLK, SLKT…SACL, and SLTI…AFLA. The region spanning 208-246 is the LRRCT domain; that stretch reads TPSIPGFDYRPFIVSWCLNLKVLDGYVVSQKESLKAEWL. Residues 306 to 330 form a disordered region; the sequence is RSDGYLTSSTPNKRLPLSTEHHSPT. The IQ domain maps to 519–548; the sequence is ISKAATKLQSCWRGFYARKYNPKVKDVCYE. Positions 607–623 are enriched in polar residues; that stretch reads TANSSENDLPSASNSKH. The disordered stretch occupies residues 607–756; sequence TANSSENDLP…RPEITTCSDN (150 aa). Basic and acidic residues predominate over residues 681-690; it reads TGRHYNDKVP. The span at 704 to 724 shows a compositional bias: polar residues; that stretch reads SQSSKDSFTSEQDSSLLQQYL.

The protein resides in the cytoplasm. Its subcellular location is the cytoskeleton. It is found in the microtubule organizing center. It localises to the centrosome. In terms of biological role, acts as a key negative regulator of ciliogenesis in collaboration with ccp110 by capping the mother centriole thereby preventing cilia formation. Required for recruitment of ccp110 to the centrosome. In Xenopus laevis (African clawed frog), this protein is Centrosomal protein of 97 kDa (cep97).